Consider the following 126-residue polypeptide: Fluoride-specific ion channel FluC (126 aa).

A run of 4 helical transmembrane segments spans residues 5–25 (GFVAVGVGAAVGAWLRWFFSV), 36–56 (YGTLASNLVGGYLIGLAVAFF), 69–89 (LAVTGFLGGLTTFSTFSSEVI), and 99–119 (WAMLHLAMHLGGSLLLTAFGI). 2 residues coordinate Na(+): Gly76 and Thr79.

It belongs to the fluoride channel Fluc/FEX (TC 1.A.43) family.

It is found in the cell inner membrane. It catalyses the reaction fluoride(in) = fluoride(out). Na(+) is not transported, but it plays an essential structural role and its presence is essential for fluoride channel function. Its function is as follows. Fluoride-specific ion channel. Important for reducing fluoride concentration in the cell, thus reducing its toxicity. The sequence is that of Fluoride-specific ion channel FluC from Cupriavidus metallidurans (strain ATCC 43123 / DSM 2839 / NBRC 102507 / CH34) (Ralstonia metallidurans).